A 319-amino-acid chain; its full sequence is 7-methylguanosine phosphate-specific 5'-nucleotidase (319 aa).

Asp55 serves as the catalytic Nucleophile. The Mg(2+) site is built by Asp55 and Asp57. Catalysis depends on Asp57, which acts as the Proton donor. Glu103 is a CMP binding site. Glu103 and Ser124 together coordinate N(7)-methyl-GMP. Ser171 to Ala172 contacts substrate. Asp245 lines the Mg(2+) pocket.

This sequence belongs to the pyrimidine 5'-nucleotidase family. In terms of assembly, monomer. Mg(2+) is required as a cofactor.

It carries out the reaction N(7)-methyl-GMP + H2O = N(7)-methylguanosine + phosphate. The enzyme catalyses CMP + H2O = cytidine + phosphate. The catalysed reaction is a ribonucleoside 5'-phosphate + H2O = a ribonucleoside + phosphate. Inhibited by high levels of AMP. In terms of biological role, specifically hydrolyzes 7-methylguanosine monophosphate (m(7)GMP) to 7-methylguanosine and inorganic phosphate. Also able to mediate hydrolysis of diphosphate (m(7)GDP) to 7-methylguanosine and 2 inorganic phosphate with lower activity. The specific activity for m(7)GMP may protect cells against undesired salvage of m(7)GMP and its incorporation into nucleic acids. Also has weak activity for CMP. UMP and purine nucleotides are poor substrates. This is 7-methylguanosine phosphate-specific 5'-nucleotidase from Drosophila melanogaster (Fruit fly).